The following is a 1485-amino-acid chain: Chromosome partition protein MukB (1485 aa).

Position 34 to 41 (34 to 41) interacts with ATP; the sequence is GGNGAGKS. Coiled coils occupy residues 337–480, 509–605, 780–805, 835–915, 977–1116, and 1210–1235; these read LNLV…QAYQ, QHLA…PVWL, RAARENRLETLYQERDRLAERYATLS, EAEI…IQQH, GMLT…AKAG, and EAIEQMEIELGRLTEELTAREQKLAI. Residues 666-783 are flexible hinge; sequence PSGAEDARLI…EVPLFGRAAR (118 aa).

The protein belongs to the SMC family. MukB subfamily. Homodimerization via its hinge domain. Binds to DNA via its C-terminal region. Interacts, and probably forms a ternary complex, with MukE and MukF via its C-terminal region. The complex formation is stimulated by calcium or magnesium. Interacts with tubulin-related protein FtsZ.

Its subcellular location is the cytoplasm. The protein localises to the nucleoid. Functionally, plays a central role in chromosome condensation, segregation and cell cycle progression. Functions as a homodimer, which is essential for chromosome partition. Involved in negative DNA supercoiling in vivo, and by this means organize and compact chromosomes. May achieve or facilitate chromosome segregation by condensation DNA from both sides of a centrally located replisome during cell division. The chain is Chromosome partition protein MukB from Yersinia pestis bv. Antiqua (strain Antiqua).